The sequence spans 242 residues: Aquaporin (242 aa).

The Cytoplasmic portion of the chain corresponds to 1 to 11; it reads MNTSTKLICQK. Residues 12–32 traverse the membrane as a helical segment; sequence LFAEMLCSCIFGFAVYSAILN. Residues 33–39 are Extracellular-facing; it reads TKASNSS. Residues 40–60 traverse the membrane as a helical segment; the sequence is ISSTTVGLTVCFSSISLIYTF. Over 61–83 the chain is Cytoplasmic; the sequence is CDHSVAHFNPAITIAAICTGKLD. Positions 69–71 match the NPA motif; that stretch reads NPA. Residues 84–104 form a helical membrane-spanning segment; sequence ILLGIGYVIAQLIGFILATLL. At 105-133 the chain is on the extracellular side; it reads TVVCFPYGYLKTMEFIASARISDDISTVN. A helical transmembrane segment spans residues 134–154; the sequence is LFFTEFILSFILVFIAFEVGI. Topologically, residues 155-175 are cytoplasmic; sequence NAIREPGVTLFVGIKQIDRSK. Residues 176–196 traverse the membrane as a helical segment; that stretch reads FAPLTIGITLGFLAFLASTTS. Residues 197–217 lie on the Extracellular side of the membrane; it reads GGAFNPGIVWGPAIMGGNFDD. Positions 201–203 match the NPG motif; that stretch reads NPG. The chain crosses the membrane as a helical span at residues 218-238; it reads FVIYIISELSGGLLGAFIQVF. At 239 to 242 the chain is on the cytoplasmic side; sequence LLFK.

The protein belongs to the MIP/aquaporin (TC 1.A.8) family.

The protein resides in the cell membrane. In terms of biological role, water channel required to facilitate the transport of water across membranes. Involved in osmotolerance. This chain is Aquaporin (AQP), found in Enterocytozoon bieneusi (strain H348) (Microsporidian parasite).